The chain runs to 502 residues: UPF0371 protein CLM_0396 (502 aa).

It belongs to the UPF0371 family.

The chain is UPF0371 protein CLM_0396 from Clostridium botulinum (strain Kyoto / Type A2).